Here is a 119-residue protein sequence, read N- to C-terminus: DNA-binding protein MmarC7_1157 (119 aa).

Basic and acidic residues predominate over residues 1-12; it reads MNPEEIRQRRLQ. The segment at 1-37 is disordered; it reads MNPEEIRQRRLQEMQAKAQEQGAANDPEAQRQAQEQQ.

This sequence belongs to the PDCD5 family.

The sequence is that of DNA-binding protein MmarC7_1157 from Methanococcus maripaludis (strain C7 / ATCC BAA-1331).